Reading from the N-terminus, the 236-residue chain is Sensory rhodopsin II (236 aa).

The next 7 membrane-spanning stretches (helical) occupy residues 4 to 24 (ITTW…VLAY), 38 to 58 (LLLI…ALGF), 73 to 93 (YVDW…LAGA), 101 to 121 (LVVL…TPSP), 122 to 142 (VSYA…YLLY), 167 to 187 (FVVV…AGVG), and 196 to 216 (LVVV…ALLA). Lys-206 bears the N6-(retinylidene)lysine mark.

The protein belongs to the archaeal/bacterial/fungal opsin family. The covalent binding of retinal to the apoprotein, bacterioopsin, generates bacteriorhodopsin.

It is found in the membrane. In terms of biological role, mediates the photorepellent response. The polypeptide is Sensory rhodopsin II (sop2) (Haloarcula marismortui (strain ATCC 43049 / DSM 3752 / JCM 8966 / VKM B-1809) (Halobacterium marismortui)).